A 487-amino-acid polypeptide reads, in one-letter code: UDP-N-acetylmuramate--L-alanine ligase (487 aa).

122–128 contacts ATP; that stretch reads GTHGKTS.

This sequence belongs to the MurCDEF family.

The protein localises to the cytoplasm. It carries out the reaction UDP-N-acetyl-alpha-D-muramate + L-alanine + ATP = UDP-N-acetyl-alpha-D-muramoyl-L-alanine + ADP + phosphate + H(+). Its pathway is cell wall biogenesis; peptidoglycan biosynthesis. In terms of biological role, cell wall formation. The polypeptide is UDP-N-acetylmuramate--L-alanine ligase (Corynebacterium urealyticum (strain ATCC 43042 / DSM 7109)).